A 762-amino-acid polypeptide reads, in one-letter code: Anhydrosialidase (762 aa).

Positions 1–27 (MGRIGKKAMAIALVSAVMVTPLNVCAT) are cleaved as a signal peptide. Substrate is bound at residue Arg-293. The Proton acceptor role is filled by Asp-318. BNR repeat units follow at residues 328 to 339 (AKSTDGGNTWSE), 511 to 522 (RYSDDEGASWSD), and 571 to 582 (MYSDDHGDNWTY). The active site involves Glu-595. A substrate-binding site is contributed by Arg-611. A BNR 4 repeat occupies 620–631 (VTSIDGGETWSD). Arg-673 serves as a coordination point for substrate. Tyr-713 (nucleophile) is an active-site residue.

The protein belongs to the glycosyl hydrolase 33 family.

Its subcellular location is the secreted. The protein localises to the extracellular space. It carries out the reaction Elimination of alpha-sialyl groups in N-acetylneuraminic acid glycosides, releasing 2,7-anhydro-alpha-N-acetylneuraminate.. This is Anhydrosialidase from Macrobdella decora (North American leech).